Consider the following 197-residue polypeptide: Large ribosomal subunit protein bL9 (197 aa).

The segment at 178–197 (GEFFDPEAQEDEAAAGETAQ) is disordered. Residues 181–191 (FDPEAQEDEAA) are compositionally biased toward acidic residues.

It belongs to the bacterial ribosomal protein bL9 family.

In terms of biological role, binds to the 23S rRNA. This Bradyrhizobium sp. (strain BTAi1 / ATCC BAA-1182) protein is Large ribosomal subunit protein bL9.